The following is a 703-amino-acid chain: Prolyl 3-hydroxylase 2 (703 aa).

Residues 1-21 (MRESTWVSLLLLLLLPAPQRG) form the signal peptide. Positions 18–40 (PQRGGPQDGRGSPEPEPERGPLQ) are disordered. TPR repeat units lie at residues 42-75 (FDLLYASGVAAYYSGDYEGAVRDLEAALRSHRRL), 144-177 (RVPYNYLQRAYIKLNQLDKAMEAAHTFFMANPEH), 205-238 (HLESYNAGVKHYEADDFEAAIKYFEQALREYFNE), and 301-334 (PLHYDYLQFAYYRVGEYVKALECAKAYLMFHPDD). Residues Asn-444, Asn-455, and Asn-544 are each glycosylated (N-linked (GlcNAc...) asparagine). Residues 552–666 (THMVCRTALS…RCAVALWFTL (115 aa)) enclose the Fe2OG dioxygenase domain. Fe cation-binding residues include His-575, Asp-577, and His-647. Residue Arg-657 is part of the active site. The short motif at 700-703 (KDEL) is the Prevents secretion from ER element.

Belongs to the leprecan family. Requires Fe cation as cofactor. It depends on L-ascorbate as a cofactor. As to expression, detected at low levels in cartilage.

The protein localises to the endoplasmic reticulum. It localises to the sarcoplasmic reticulum. The protein resides in the golgi apparatus. The catalysed reaction is L-prolyl-[collagen] + 2-oxoglutarate + O2 = trans-3-hydroxy-L-prolyl-[collagen] + succinate + CO2. Prolyl 3-hydroxylase that catalyzes the post-translational formation of 3-hydroxyproline on collagens. Contributes to proline 3-hydroxylation of collagen COL4A1 and COL1A1 in tendons, the eye sclera and in the eye lens capsule. Has high activity with the type IV collagen COL4A1, and lower activity with COL1A1. Catalyzes hydroxylation of the first Pro in Gly-Pro-Hyp sequences where Hyp is 4-hydroxyproline. Has no activity on substrates that lack 4-hydroxyproline in the third position. This Rattus norvegicus (Rat) protein is Prolyl 3-hydroxylase 2.